The chain runs to 312 residues: Acetaldehyde dehydrogenase 4 (312 aa).

S12–I15 lines the NAD(+) pocket. C132 functions as the Acyl-thioester intermediate in the catalytic mechanism. NAD(+) is bound by residues S163–N171 and N290.

Belongs to the acetaldehyde dehydrogenase family.

It carries out the reaction acetaldehyde + NAD(+) + CoA = acetyl-CoA + NADH + H(+). The protein is Acetaldehyde dehydrogenase 4 of Azotobacter vinelandii (strain DJ / ATCC BAA-1303).